We begin with the raw amino-acid sequence, 338 residues long: Decarboxylase macB (338 aa).

His7, His9, His159, and Asp283 together coordinate Zn(2+).

It belongs to the metallo-dependent hydrolases superfamily. ACMSD family.

The enzyme catalyses 6-methylsalicylate + H(+) = 3-methylphenol + CO2. It functions in the pathway secondary metabolite biosynthesis; terpenoid biosynthesis. Decarboxylase; part of the gene cluster that mediates the biosynthesis of macrophorins, isoprenoid epoxycyclohexenones containing cyclized drimane moieties. The first step of the pathway is the synthesis of 6-methylsalicylic acid (6-MSA) by the polyketide synthase macA. 6-MSA is then converted to m-cresol by the decarboxylase macB. The cytochrome P450 monooxygenase macC then catalyzes the oxidation of m-cresol to toluquinol. Epoxidation of toluquinol is then performed by the short chain dehydrogenase macD, with the help of macE, and a further prenylation by macG leads to 7-deacetoxyyanuthone A. The next step is the hydroxylation of C-22 of 7-deacetoxyyanuthone A by the cytochrome P450 monooxygenase macH to yield 22-deacetylyanuthone A. O-Mevalon transferase macI then attaches mevalon to the hydroxyl group of 22-deacetylyanuthone A to produce yanuthone E. The terpene cyclase macJ catalyzes the cyclization of 22-deacetylyanuthone A to macrophorin A. MacJ is also able to catalyze cyclization of yanuthone E and 7-deacetoxyyanuthone A to their corresponding macrophorins. The macJ products can be further modified by macH and macJ, as well as by the FAD-dependent monooxygenase macF, to produce additional macrophorins, including 4'-oxomacrophorin A, 4'-oxomacrophorin D and 4'-oxomacrophorin E. This is Decarboxylase macB from Penicillium terrestre.